The sequence spans 282 residues: Pantothenate synthetase (282 aa).

28 to 35 (MGALHSGH) is an ATP binding site. Catalysis depends on His35, which acts as the Proton donor. Gln59 lines the (R)-pantoate pocket. Gln59 serves as a coordination point for beta-alanine. 146-149 (GEKD) is an ATP binding site. Gln152 contacts (R)-pantoate. Residues Val175 and 183 to 186 (LSSR) each bind ATP.

The protein belongs to the pantothenate synthetase family. Homodimer.

Its subcellular location is the cytoplasm. The catalysed reaction is (R)-pantoate + beta-alanine + ATP = (R)-pantothenate + AMP + diphosphate + H(+). It functions in the pathway cofactor biosynthesis; (R)-pantothenate biosynthesis; (R)-pantothenate from (R)-pantoate and beta-alanine: step 1/1. Catalyzes the condensation of pantoate with beta-alanine in an ATP-dependent reaction via a pantoyl-adenylate intermediate. The sequence is that of Pantothenate synthetase from Salinispora arenicola (strain CNS-205).